The sequence spans 453 residues: MKTKFCTGGEAEPSPLGLLLSCGGNAAPTPGVGQQRDAAGELESKQLGGRTQPLALPPPPPPPLPLPPPPSPPLADEQPEPRTRRRAYLWCKEFLPGAWRGLREDQFHISVIRGGLSNMLFQCSLPDSIASVGDEPRKVLLRLYGAILKMRSCNKEGSEQAQNENEFQGAEAMVLESVMFAILAERSLGPKLFGIFPQGRLEQFIPSRRLDTEELRLPDISAEIAEKMATFHGMKMPFNKEPKWLFGTMEKYLNQVLRLKFSREARVQQLHKILSYNLPLELENLRSLLQYTRSPVVFCHNDCQEGNILLLEGQENSERRKLMLIDFEYSSYNYRGFDIGNHFCEWMYDYTYEKYPFFRANIQKYPSRKQQLHFISSYLTTFQNDFESLSSEEQFATKEDMLLEVNRFALASHFLWGLWSIVQAKISSIEFGYMEYAQARFEAYFDQKRKLGV.

A disordered region spans residues 22–81; the sequence is CGGNAAPTPGVGQQRDAAGELESKQLGGRTQPLALPPPPPPPLPLPPPPSPPLADEQPEP. The segment covering 55–73 has biased composition (pro residues); sequence ALPPPPPPPLPLPPPPSPP. Serine 71 bears the Phosphoserine mark. ATP-binding positions include 113-119, arginine 142, and 203-209; these read RGGLSNM and QFIPSRR. A phosphocholine-binding site is contributed by 115-117; it reads GLS. Position 243 is an N6-acetyllysine (lysine 243). Serine 275 is subject to Phosphoserine. 2 residues coordinate ATP: glutamine 304 and aspartate 326.

It belongs to the choline/ethanolamine kinase family. In terms of assembly, homodimer. Heterodimer with CHKB. Monomer; acetylation by KAT5 promotes dissociation of the homodimer and monomerization. In terms of processing, phosphorylated at Ser-275 by AMPK in response to glucose deprivation, leading to localization to lipid droplets. Post-translationally, acetylated by KAT5 at Lys-243 following phosphorylation by AMPK, leading to monomerization and conversion into a tyrosine-protein kinase. In terms of tissue distribution, expressed ubiquitously with the highest level in testis.

The protein resides in the cytoplasm. It localises to the cytosol. Its subcellular location is the lipid droplet. The catalysed reaction is choline + ATP = phosphocholine + ADP + H(+). The enzyme catalyses ethanolamine + ATP = phosphoethanolamine + ADP + H(+). It catalyses the reaction L-tyrosyl-[protein] + ATP = O-phospho-L-tyrosyl-[protein] + ADP + H(+). The protein operates within phospholipid metabolism; phosphatidylcholine biosynthesis; phosphocholine from choline: step 1/1. It functions in the pathway phospholipid metabolism; phosphatidylethanolamine biosynthesis; phosphatidylethanolamine from ethanolamine: step 1/3. Plays a key role in phospholipid biosynthesis by catalyzing the phosphorylation of free choline to phosphocholine, the first step in phosphatidylcholine biosynthesis. Also phosphorylates ethanolamine, thereby contributing to phosphatidylethanolamine biosynthesis. Has higher activity with choline. Functionally, this isoform plays a key role in lipolysis of lipid droplets following glucose deprivation. In response to glucose deprivation, phosphorylated by AMPK, promoting localization to lipid droplets. Phosphorylation is followed by acetylation by KAT5, leading to dissociation of the homodimer into a monomer. Monomeric CHKA isoform 1 is converted into a tyrosine-protein kinase, which phosphorylates lipid droplet structural proteins PLIN2 and PLIN3, leading to lipolysis of lipid droplets. The polypeptide is Choline kinase alpha (Chka) (Mus musculus (Mouse)).